The sequence spans 556 residues: Dihydroxy-acid dehydratase (556 aa).

Cys-47 lines the [2Fe-2S] cluster pocket. Mg(2+) is bound at residue Asp-79. A [2Fe-2S] cluster-binding site is contributed by Cys-120. Mg(2+)-binding residues include Asp-121 and Lys-122. Lys-122 is subject to N6-carboxylysine. Cys-192 contributes to the [2Fe-2S] cluster binding site. Mg(2+) is bound at residue Glu-444. The active-site Proton acceptor is the Ser-470.

This sequence belongs to the IlvD/Edd family. In terms of assembly, homodimer. It depends on [2Fe-2S] cluster as a cofactor. The cofactor is Mg(2+).

It carries out the reaction (2R)-2,3-dihydroxy-3-methylbutanoate = 3-methyl-2-oxobutanoate + H2O. The enzyme catalyses (2R,3R)-2,3-dihydroxy-3-methylpentanoate = (S)-3-methyl-2-oxopentanoate + H2O. It functions in the pathway amino-acid biosynthesis; L-isoleucine biosynthesis; L-isoleucine from 2-oxobutanoate: step 3/4. The protein operates within amino-acid biosynthesis; L-valine biosynthesis; L-valine from pyruvate: step 3/4. In terms of biological role, functions in the biosynthesis of branched-chain amino acids. Catalyzes the dehydration of (2R,3R)-2,3-dihydroxy-3-methylpentanoate (2,3-dihydroxy-3-methylvalerate) into 2-oxo-3-methylpentanoate (2-oxo-3-methylvalerate) and of (2R)-2,3-dihydroxy-3-methylbutanoate (2,3-dihydroxyisovalerate) into 2-oxo-3-methylbutanoate (2-oxoisovalerate), the penultimate precursor to L-isoleucine and L-valine, respectively. The chain is Dihydroxy-acid dehydratase from Prochlorococcus marinus (strain MIT 9303).